A 91-amino-acid polypeptide reads, in one-letter code: Small ribosomal subunit protein bS20 (91 aa).

The segment covering 1–21 has biased composition (basic and acidic residues); sequence MPLHKSAEKRLRQAARRNERN. Residues 1-24 are disordered; that stretch reads MPLHKSAEKRLRQAARRNERNRAR.

It belongs to the bacterial ribosomal protein bS20 family.

In terms of biological role, binds directly to 16S ribosomal RNA. In Chlorobaculum parvum (strain DSM 263 / NCIMB 8327) (Chlorobium vibrioforme subsp. thiosulfatophilum), this protein is Small ribosomal subunit protein bS20.